Reading from the N-terminus, the 257-residue chain is Imidazole glycerol phosphate synthase subunit HisF (257 aa).

Catalysis depends on residues aspartate 12 and aspartate 131.

Belongs to the HisA/HisF family. Heterodimer of HisH and HisF.

The protein resides in the cytoplasm. The enzyme catalyses 5-[(5-phospho-1-deoxy-D-ribulos-1-ylimino)methylamino]-1-(5-phospho-beta-D-ribosyl)imidazole-4-carboxamide + L-glutamine = D-erythro-1-(imidazol-4-yl)glycerol 3-phosphate + 5-amino-1-(5-phospho-beta-D-ribosyl)imidazole-4-carboxamide + L-glutamate + H(+). The protein operates within amino-acid biosynthesis; L-histidine biosynthesis; L-histidine from 5-phospho-alpha-D-ribose 1-diphosphate: step 5/9. In terms of biological role, IGPS catalyzes the conversion of PRFAR and glutamine to IGP, AICAR and glutamate. The HisF subunit catalyzes the cyclization activity that produces IGP and AICAR from PRFAR using the ammonia provided by the HisH subunit. The protein is Imidazole glycerol phosphate synthase subunit HisF of Saccharophagus degradans (strain 2-40 / ATCC 43961 / DSM 17024).